The following is a 20-amino-acid chain: Cupiennin-6f (20 aa).

In terms of tissue distribution, expressed by the venom gland.

Its subcellular location is the secreted. This chain is Cupiennin-6f, found in Cupiennius salei (American wandering spider).